The sequence spans 80 residues: Translation initiation factor IF-1 (80 aa).

The S1-like domain maps to 6–80 (EKRKKEESDV…TSRGRIVYRK (75 aa)).

It belongs to the IF-1 family. In terms of assembly, component of the 30S ribosomal translation pre-initiation complex which assembles on the 30S ribosome in the order IF-2 and IF-3, IF-1 and N-formylmethionyl-tRNA(fMet); mRNA recruitment can occur at any time during PIC assembly.

The protein resides in the cytoplasm. In terms of biological role, one of the essential components for the initiation of protein synthesis. Stabilizes the binding of IF-2 and IF-3 on the 30S subunit to which N-formylmethionyl-tRNA(fMet) subsequently binds. Helps modulate mRNA selection, yielding the 30S pre-initiation complex (PIC). Upon addition of the 50S ribosomal subunit IF-1, IF-2 and IF-3 are released leaving the mature 70S translation initiation complex. This Deinococcus geothermalis (strain DSM 11300 / CIP 105573 / AG-3a) protein is Translation initiation factor IF-1.